The primary structure comprises 473 residues: UDP-N-acetylmuramate--L-alanine ligase (473 aa).

112 to 118 (GTHGKTT) contacts ATP.

The protein belongs to the MurCDEF family.

The protein resides in the cytoplasm. It catalyses the reaction UDP-N-acetyl-alpha-D-muramate + L-alanine + ATP = UDP-N-acetyl-alpha-D-muramoyl-L-alanine + ADP + phosphate + H(+). Its pathway is cell wall biogenesis; peptidoglycan biosynthesis. Functionally, cell wall formation. This Nitrosomonas europaea (strain ATCC 19718 / CIP 103999 / KCTC 2705 / NBRC 14298) protein is UDP-N-acetylmuramate--L-alanine ligase.